Here is a 244-residue protein sequence, read N- to C-terminus: U4/U6.U5 tri-snRNP-associated protein 3-like protein C162.01c (244 aa).

Basic and acidic residues-rich tracts occupy residues 1 to 11 (MSSSRSGEHRR) and 20 to 116 (ESSR…RRDG). Disordered regions lie at residues 1-192 (MSSS…EDEA) and 223-244 (KKTK…LDNE). Phosphoserine occurs at positions 121 and 140. The span at 126-182 (GLERKREHEKLQAPSPKEEEERPVDQGDKMDGVKEDKDGSLEVGKSHDAMTRTKSAE) shows a compositional bias: basic and acidic residues. Positions 183–192 (EEIVEQEDEA) are enriched in acidic residues.

Belongs to the SNUT3 family. As to quaternary structure, part of a tri-snRNP complex.

Its subcellular location is the nucleus. Functionally, may play a role in mRNA splicing. The sequence is that of U4/U6.U5 tri-snRNP-associated protein 3-like protein C162.01c from Schizosaccharomyces pombe (strain 972 / ATCC 24843) (Fission yeast).